A 166-amino-acid chain; its full sequence is Small ribosomal subunit protein uS9 (166 aa).

The interval 135-166 (KKAGFLTRDPRATERKKYGLKKARKAPQYSKR) is disordered. Basic and acidic residues predominate over residues 142–151 (RDPRATERKK). Positions 152 to 166 (YGLKKARKAPQYSKR) are enriched in basic residues.

It belongs to the universal ribosomal protein uS9 family.

The polypeptide is Small ribosomal subunit protein uS9 (Mycobacterium avium (strain 104)).